The chain runs to 231 residues: Elongation factor 1-delta 2 (231 aa).

An N-acetylalanine modification is found at A2. One can recognise a GST C-terminal domain in the interval 11–73 (SGLKKLDEHL…LRISGVSAEG (63 aa)). A disordered region spans residues 82-136 (SPITEEAVATPPAADSKDTAAEEEDDDDVDLFGEETEEEKKAAEERAASVKASTK). Positions 102–118 (AEEEDDDDVDLFGEETE) are enriched in acidic residues. Basic and acidic residues predominate over residues 119-129 (EEKKAAEERAA).

It belongs to the EF-1-beta/EF-1-delta family. As to quaternary structure, EF-1 is composed of 4 subunits: alpha, beta (1B-alpha=beta'), delta (1B-beta), and gamma (1B-gamma).

Its function is as follows. EF-1-beta and EF-1-delta stimulate the exchange of GDP bound to EF-1-alpha to GTP. The polypeptide is Elongation factor 1-delta 2 (Arabidopsis thaliana (Mouse-ear cress)).